Here is a 191-residue protein sequence, read N- to C-terminus: MKIVLASKSPRRRELLSNLGLDFEVIESNVEEFSSEKHPSRYVMDLSFNKAMSVAKKLKEEAIVIGADTIVVIEDKVLGKPKDRDEAFIMLKNLQGRVHTVYTGITIVRTKDFKYVSDFEETKVWIKKLEDEEIFNYIDTGEGYDKAGAYAIQGVGALIVEKIEGDYFNVVGLPISKLFDILKREFDVRLL.

The active-site Proton acceptor is D68.

It belongs to the Maf family. YhdE subfamily. It depends on a divalent metal cation as a cofactor.

It is found in the cytoplasm. It carries out the reaction dTTP + H2O = dTMP + diphosphate + H(+). The catalysed reaction is UTP + H2O = UMP + diphosphate + H(+). Its function is as follows. Nucleoside triphosphate pyrophosphatase that hydrolyzes dTTP and UTP. May have a dual role in cell division arrest and in preventing the incorporation of modified nucleotides into cellular nucleic acids. The chain is dTTP/UTP pyrophosphatase from Thermoanaerobacter pseudethanolicus (strain ATCC 33223 / 39E) (Clostridium thermohydrosulfuricum).